The sequence spans 1399 residues: DNA-directed RNA polymerase subunit beta' (1399 aa).

Residues Cys71, Cys73, Cys86, and Cys89 each coordinate Zn(2+). Mg(2+)-binding residues include Asp462, Asp464, and Asp466. The Zn(2+) site is built by Cys810, Cys884, Cys891, and Cys894. The tract at residues 1379–1399 (KQAAIVPSQPEPQPLALPPAE) is disordered. A compositionally biased stretch (pro residues) spans 1387–1399 (QPEPQPLALPPAE).

The protein belongs to the RNA polymerase beta' chain family. As to quaternary structure, the RNAP catalytic core consists of 2 alpha, 1 beta, 1 beta' and 1 omega subunit. When a sigma factor is associated with the core the holoenzyme is formed, which can initiate transcription. Mg(2+) is required as a cofactor. Zn(2+) serves as cofactor.

It catalyses the reaction RNA(n) + a ribonucleoside 5'-triphosphate = RNA(n+1) + diphosphate. Functionally, DNA-dependent RNA polymerase catalyzes the transcription of DNA into RNA using the four ribonucleoside triphosphates as substrates. The chain is DNA-directed RNA polymerase subunit beta' from Bradyrhizobium sp. (strain BTAi1 / ATCC BAA-1182).